We begin with the raw amino-acid sequence, 392 residues long: Galactokinase (392 aa).

4 residues coordinate alpha-D-galactose: arginine 37, glutamate 43, histidine 44, and aspartate 46. The ATP site is built by glycine 136, glycine 138, serine 140, and serine 141. Aspartate 186 lines the alpha-D-galactose pocket. Residue aspartate 186 is the Proton acceptor of the active site. Residue serine 230 is modified to Phosphoserine. Alpha-D-galactose is bound at residue tyrosine 236.

This sequence belongs to the GHMP kinase family. GalK subfamily. In terms of assembly, homodimer.

It catalyses the reaction alpha-D-galactose + ATP = alpha-D-galactose 1-phosphate + ADP + H(+). It participates in carbohydrate metabolism; galactose metabolism. Functionally, catalyzes the transfer of a phosphate from ATP to alpha-D-galactose and participates in the first committed step in the catabolism of galactose. The sequence is that of Galactokinase (GALK1) from Bos taurus (Bovine).